The primary structure comprises 792 residues: Molybdenum cofactor sulfurase (792 aa).

N6-(pyridoxal phosphate)lysine is present on lysine 246. The active site involves cysteine 414. Positions leucine 646–threonine 792 constitute an MOSC domain. Serine 748 is modified (phosphoserine).

It belongs to the class-V pyridoxal-phosphate-dependent aminotransferase family. MOCOS subfamily. Pyridoxal 5'-phosphate is required as a cofactor.

The enzyme catalyses Mo-molybdopterin + L-cysteine + AH2 = thio-Mo-molybdopterin + L-alanine + A + H2O. The protein operates within cofactor biosynthesis; molybdopterin biosynthesis. Sulfurates the molybdenum cofactor. Sulfation of molybdenum is essential for xanthine dehydrogenase (XDH) and aldehyde oxidase (ADO) enzymes in which molybdenum cofactor is liganded by 1 oxygen and 1 sulfur atom in active form. The polypeptide is Molybdenum cofactor sulfurase (Drosophila pseudoobscura pseudoobscura (Fruit fly)).